The following is a 907-amino-acid chain: MSLTRRFSLTLLLLLPLLTSLLAAIPVLQANLSPAPSSSPGPGVRILRAPESTVAPPGDEVVFVCETSLPPEYFEWSYASSRSHPPRFKYLKSSSAKANHNITITHNNDISKLRVIVRPETLGEYRCVAWFGPLAVTSTTARLEMASISGDGADTDQRAHWRVAAGNTVLWHCGQVASNPAPSWSFYYNDNEMPPASTLSDSNGTLLLPHVSAASSGSYSCVATNTASGVRLALPSRLELQVPAAALASTAPALLNGQRVRTQVFAKAGETVLLLCPGVGYPPPTAVWSSPNVPGAVYNNRTRVLPYGLQISALQPLDAGTYICYLDNGIRPALEHFIELVVQKSPRILRPPTANLTNEGERMQLECEATGMPKPEIYWLLNGESSVYDVEAEQVPNGHLILHSVQKRHAGYVQCFARNSLGEHSAGTLLQVNPKQLPDGEGTGMDSGRSSARPTHSRKQKQQTQMVPPSAPNVTRLSDESVMLRWHVVRNDGLPIQFFKVQYRMLTESGKRKSWQTTNENIPYGRQRHESGAGVRNFTSSVTGLKPNSSYRFRIMAVYSNNDNKESNTSGKFFLQRGAALAPLAVPELVDIEEYSQTAVVLHWRLSSDADEQLISGYYAYYRPSASAGEYLKATIDGAKSRSFQISALEPGTIYEFKLQSFSAVAASEFSALKQGRTQRPRASSTPQPVLHAVDTTTPSHNETFNMNPMLTGTIGGGALLVLLVISACLCLCRRRSSRGNNPQHKPRLAELREDFVPLNTCSPNKPRTRHIHITLNPLAQQQQQQQQQQLQQQQHDEKEAQDNDMGYFQRQPVVYDAETLGFNGLARMSSSSLRRSQRTLERAAAGGGSGGNNNNLNQPGDGSLANSADSPRLQASNKPGRVILKRARLSSRSENLSSGSLNSVGV.

Residues 1 to 23 (MSLTRRFSLTLLLLLPLLTSLLA) form the signal peptide. Residues 24-709 (AIPVLQANLS…SHNETFNMNP (686 aa)) are Extracellular-facing. Ig-like C2-type domains are found at residues 42–149 (PGVR…ASIS), 152–233 (GADT…VRLA), 252–340 (PALL…FIEL), and 346–433 (PRIL…LQVN). Intrachain disulfides connect C65-C127, C173-C221, and C276-C324. N101, N203, N300, and N355 each carry an N-linked (GlcNAc...) asparagine glycan. A disulfide bridge connects residues C367 and C415. Residues 427–474 (GTLLQVNPKQLPDGEGTGMDSGRSSARPTHSRKQKQQTQMVPPSAPNV) form a disordered region. A compositionally biased stretch (polar residues) spans 462–474 (QQTQMVPPSAPNV). 2 consecutive Fibronectin type-III domains span residues 468-578 (PPSA…LQRG) and 586-681 (VPEL…TQRP). An N-linked (GlcNAc...) asparagine glycan is attached at N473. Heparin is bound by residues R504, K511, and K513. 2 N-linked (GlcNAc...) asparagine glycosylation sites follow: N537 and N548. Position 552 (R552) interacts with heparin. The N-linked (GlcNAc...) asparagine glycan is linked to N568. Over residues 676 to 688 (GRTQRPRASSTPQ) the composition is skewed to polar residues. Positions 676-701 (GRTQRPRASSTPQPVLHAVDTTTPSH) are disordered. N702 carries N-linked (GlcNAc...) asparagine glycosylation. A helical transmembrane segment spans residues 710–730 (MLTGTIGGGALLVLLVISACL). The Cytoplasmic segment spans residues 731-907 (CLCRRRSSRG…SSGSLNSVGV (177 aa)). Disordered regions lie at residues 780–805 (AQQQQQQQQQQLQQQQHDEKEAQDND) and 829–881 (MSSS…NKPG). 2 stretches are compositionally biased toward low complexity: residues 781-794 (QQQQQQQQQQLQQQ) and 853-863 (NNNNLNQPGDG). Residues 865–878 (LANSADSPRLQASN) show a composition bias toward polar residues.

This sequence belongs to the immunoglobulin superfamily. IHOG family. As to quaternary structure, homodimer. Heterotetramer; 2 iHog chains bind 2 hh chains when facilitated by heparin, heparin is required to promote high-affinity interactions between hh and iHog.

The protein resides in the membrane. Mediates response to the active Hedgehog (Hh) protein signal in embryos, functioning upstream or at the level of patched (ptc). The protein is Interference hedgehog of Drosophila virilis (Fruit fly).